The following is a 340-amino-acid chain: Flavonoid 7-O-methyltransferase 2 (340 aa).

Aspartate 207 provides a ligand contact to S-adenosyl-L-methionine. Histidine 245 functions as the Proton acceptor in the catalytic mechanism.

This sequence belongs to the class I-like SAM-binding methyltransferase superfamily. Cation-independent O-methyltransferase family. Homodimer. Expressed in leaves.

The enzyme catalyses scutellarein 4'-methyl ether + S-adenosyl-L-methionine = ladanein + S-adenosyl-L-homocysteine. It catalyses the reaction acacetin + S-adenosyl-L-methionine = apigenin 4',7-dimethyl ether + S-adenosyl-L-homocysteine. The catalysed reaction is diosmetin + S-adenosyl-L-methionine = luteolin 4',7-dimethyl ether + S-adenosyl-L-homocysteine. It carries out the reaction chrysoeriol + S-adenosyl-L-methionine = velutin + S-adenosyl-L-homocysteine. The enzyme catalyses (2S)-naringenin + S-adenosyl-L-methionine = (2S)-sakuranetin + S-adenosyl-L-homocysteine + H(+). It catalyses the reaction apigenin + S-adenosyl-L-methionine = genkwanin + S-adenosyl-L-homocysteine + H(+). The catalysed reaction is luteolin + S-adenosyl-L-methionine = luteolin 7-methyl ether + S-adenosyl-L-homocysteine + H(+). It carries out the reaction scutellarein + S-adenosyl-L-methionine = scutellarein 7-methyl ether + S-adenosyl-L-homocysteine. It participates in flavonoid metabolism. Flavonoid 7-O-methyltransferase involved in the biosynthesis of polymethoxylated flavonoids natural products such as nevadensin and salvigenin, aroma compounds which contribute to the flavor of sweet basil, and exhibit pharmacological activities such as anti-allergic, anti-oxidant, antibacterial, anti-proliferative, and anti-inflammatory effects. Catalyzes S-adenosylmethionine-dependent regioselective 7-O-methylation of flavonoids; active on various hydroxylated flavonoid substrates, including apigenin (API) and luteolin (LUT), and, with a lower efficiency, scutellarein (SCU), naringenin (NAR), chrysoeriol (CHRYS), diosmetin (DIOS), acacetin (ACA) and scutellarein-7-methyl ether (SCU7Me). This chain is Flavonoid 7-O-methyltransferase 2, found in Ocimum basilicum (Sweet basil).